The sequence spans 154 residues: Cytochrome c oxidase subunit 5A, mitochondrial (154 aa).

Residues 1 to 45 (MLAAALRRCXASVRVLLPKPGAAAPSSWSSSAFRATAAIQSVRCY) constitute a mitochondrion transit peptide. The short motif at 2-21 (LAAALRRCXASVRVLLPKPG) is the SIFI-degron element. An N6-acetyllysine mark is found at K91 and K117. T145 is subject to Phosphothreonine.

This sequence belongs to the cytochrome c oxidase subunit 5A family. As to quaternary structure, component of the cytochrome c oxidase (complex IV, CIV), a multisubunit enzyme composed of 14 subunits. The complex is composed of a catalytic core of 3 subunits MT-CO1, MT-CO2 and MT-CO3, encoded in the mitochondrial DNA, and 11 supernumerary subunits COX4I, COX5A, COX5B, COX6A, COX6B, COX6C, COX7A, COX7B, COX7C, COX8 and NDUFA4, which are encoded in the nuclear genome. The complex exists as a monomer or a dimer and forms supercomplexes (SCs) in the inner mitochondrial membrane with NADH-ubiquinone oxidoreductase (complex I, CI) and ubiquinol-cytochrome c oxidoreductase (cytochrome b-c1 complex, complex III, CIII), resulting in different assemblies (supercomplex SCI(1)III(2)IV(1) and megacomplex MCI(2)III(2)IV(2)). Interacts with AFG1L. Interacts with RAB5IF. Post-translationally, in response to mitochondrial stress, the precursor protein is ubiquitinated by the SIFI complex in the cytoplasm before mitochondrial import, leading to its degradation. Within the SIFI complex, UBR4 initiates ubiquitin chain that are further elongated or branched by KCMF1.

It localises to the mitochondrion inner membrane. The protein operates within energy metabolism; oxidative phosphorylation. Functionally, component of the cytochrome c oxidase, the last enzyme in the mitochondrial electron transport chain which drives oxidative phosphorylation. The respiratory chain contains 3 multisubunit complexes succinate dehydrogenase (complex II, CII), ubiquinol-cytochrome c oxidoreductase (cytochrome b-c1 complex, complex III, CIII) and cytochrome c oxidase (complex IV, CIV), that cooperate to transfer electrons derived from NADH and succinate to molecular oxygen, creating an electrochemical gradient over the inner membrane that drives transmembrane transport and the ATP synthase. Cytochrome c oxidase is the component of the respiratory chain that catalyzes the reduction of oxygen to water. Electrons originating from reduced cytochrome c in the intermembrane space (IMS) are transferred via the dinuclear copper A center (CU(A)) of subunit 2 and heme A of subunit 1 to the active site in subunit 1, a binuclear center (BNC) formed by heme A3 and copper B (CU(B)). The BNC reduces molecular oxygen to 2 water molecules using 4 electrons from cytochrome c in the IMS and 4 protons from the mitochondrial matrix. In Notamacropus parma (Parma wallaby), this protein is Cytochrome c oxidase subunit 5A, mitochondrial (COX5A).